The chain runs to 179 residues: MKQFLDFLPLVVFFAFYKIYDIYAATAALIVATAIVLIYSWVRFRKVEKMALITFVLVVVFGGLTLFFHNDEFIKWKVTVIYALFAGALLVSQWVMKKPLIQRMLSKELTLPQPVWSKLNLAWAVFFILCGLANIYIAFWLPQNIWVNFKVFGLTALTLIFTLLSGIYIYRHMPQEDKS.

5 helical membrane passes run 22–42 (IYAATAALIVATAIVLIYSWV), 50–70 (MALITFVLVVVFGGLTLFFHN), 76–96 (WKVTVIYALFAGALLVSQWVM), 121–141 (LAWAVFFILCGLANIYIAFWL), and 149–169 (FKVFGLTALTLIFTLLSGIYI).

This sequence belongs to the YciB family.

It is found in the cell inner membrane. In terms of biological role, plays a role in cell envelope biogenesis, maintenance of cell envelope integrity and membrane homeostasis. This is Inner membrane-spanning protein YciB from Shigella boydii serotype 4 (strain Sb227).